A 252-amino-acid chain; its full sequence is Proteasome subunit alpha type-7-1B (252 aa).

The protein belongs to the peptidase T1A family. As to quaternary structure, the 26S proteasome consists of a 20S proteasome core and two 19S regulatory subunits. The 20S proteasome core is composed of 28 subunits that are arranged in four stacked rings, resulting in a barrel-shaped structure. The two end rings are each formed by seven alpha subunits, and the two central rings are each formed by seven beta subunits. The catalytic chamber with the active sites is on the inside of the barrel. Testis specific.

Its subcellular location is the cytoplasm. It is found in the nucleus. The proteasome is a multicatalytic proteinase complex which is characterized by its ability to cleave peptides with Arg, Phe, Tyr, Leu, and Glu adjacent to the leaving group at neutral or slightly basic pH. The proteasome has an ATP-dependent proteolytic activity. In Drosophila melanogaster (Fruit fly), this protein is Proteasome subunit alpha type-7-1B (Prosalpha4T2).